A 2104-amino-acid polypeptide reads, in one-letter code: MSYLSKNGSNDNNNIIKKLVDAEKHCNAVKDASFDERTWIWIPDSKESFVKAWIVEDLGEKYRVKLERDGSERIVDGFDAEKVNPPKFDMVDDMAALTCLNEPSVVNNLTQRYEKDLIYTYSGLFLVAVNPYCHLPIYGDDVVRKYQSKQFKETKPHIFGTADAAYRSLLERRINQSILVTGESGAGKTETTKKVIQYLTSVTDASTSDSQQLEKKILETNPVLEAFGNAQTVRNNNSSRFGKFIRIEFSNNGSIVGANLDWYLLEKSRVIHPSSNERNYHVFYQLLRGADGSLLESLFLDRYVDHYSYLKNGLKHINGVDDGKEFQKLCFGLRTLGFDNNEIHSLFLIIASILHIGNIEVASDRSGQARFPSLTQIDQLCHLLEIPVDGFVNAALHPKSKAGREWIVTARTREQVVHTLQSLAKGLYERNFAHLVKRLNQTMYYSQSEHDGFIGVLDIAGFEIFTFNSFEQLCINFTNEKLQQFFNHYMFVLEQEEYTQERIEWDFIDYGNDLQPTIDAIEKSEPIGIFSCLDEDCVMPMATDATFTEKLHLLFKGKSDIYRPKKFSSEGFVLKHYAGDVEYDTKDWLEKNKDPLNACLAALMFKSTNSHVSSLFDDYSSNASGRDNIEKKGIFRTVSQRHRRQLSSLMHQLEATQPHFVRCIIPNNLKQPHNLDKSLVLHQLRCNGVLEGIRIAQTGFPNKLFYTEFRARYGILSQSLKRGYVEAKKATITIINELKLPSTVYRLGETKVFFKASVLGSLEDRRNALLRVIFNSFSARIRGFLTRRRLYRFNHRQDAAILLQHNLRQLKLLKPHPWWNLFLHLKPLLGTTQTDEYLRRKDALINNLQNQLESTKEVANELTITKERVLQLTNDLQEEQALAHEKDILVERANSRVEVVHERLSSLENQVTIADEKYEFLYAEKQSIEEDLANKQTEISYLSDLSSTLEKKLSSIKKDEQTISSKYKELEKDYLNIMADYQHSSQHLSNLEKAINEKNLNIRELNEKLMRLDDELLLKQRSYDTKVQELREENASLKDQCRTYESQLASLVSKYSETESELNKKEAELVIFQKEITEYRDQLHKAFQNPEKTHNINDVKSGPLNSDENIYSTSSTTLSILKDVQELKSLHTKEANQLSERIKEISEMLEQSIATEEKLRRKNSELCDIIEALKYQIQDQETEIISLNADNLDLKDTNGVLEKNASDFIDFQGIKSRYEHKISDLLNQLQKERCKVGLLKQKTENRSVTQHTLDGNSPHPSFEEKHSGDPLKRIDGNNDDRKIDNKLLKTISKSLDALQLTVEEELSNLYSLSKDLSFTDISGHIPNSIRKLEKGLSTLSELKERLNASNSDRPSPDIFKDTQAIMNSRKLLSNPNSDAQSGLISSLQKKLYNPESNMEFTGLKPLSPSKISNLPSSQPGSPSKRSGKMEALIRNFDQNSSIPDPFIVNQRNSVLQTEFEKINLKLKEATKSGILDNKDLSKFSELIQSLLKENEELKNLTTSNLGSDDKMLDFAPLLEDVPNNTRNQIKGFVEKAISSKRAIAKLYSASEEKLFSTEKALREITKERDRLLHGLQGPSVPTSPLKAPTASQLIIPNFDGSITNYSGEEETEWLQEEVNIMKIKELTSTVNKYREQLAMVQSLNEHAESSLSKAERSKNYLTGRLQEVEELARGFQTTNADLQNELADAVVKQKEYEVLYVEKSNDYNTLLLQKEKLMKQIDEFHVIRVQDLEEREKKDQLLFQRYQKELNGFKVQLEEEREKNLRIRQDNRHMHAEIGDIRTKFDELVLEKTNLLKENSILQADLQSLSRVNNSSSTAQQNAQSQLLSLTAQLQEVREANQTLRKDQDTLLRENRNLERKLHEVSEQLNKKFDSSARPFDEIEMEKEVLTLKSNLAQKDDLLSSLVERIKQIEMFALKTQKDSNNHREENLQLHRQLGVLQKEKKDLELKLFDLDLKTYPISTSKDVRMLQKQISDLEASFAASDIERIKGIDECRNRDRTIRQLEAQISKFDDDKKRIQSSVSRLEERNAQLRNQLEDVQASETQWKFALRRTEHALQEERERVKSLETDFDKYRSLLEGQRVKRSESRLSMRSNRSPSVLR.

The region spanning 35–85 is the Myosin N-terminal SH3-like domain; the sequence is DERTWIWIPDSKESFVKAWIVEDLGEKYRVKLERDGSERIVDGFDAEKVNP. Residues 89–767 enclose the Myosin motor domain; that stretch reads DMVDDMAALT…VLGSLEDRRN (679 aa). An ATP-binding site is contributed by 182–189; that stretch reads GESGAGKT. The tract at residues 646–660 is actin-binding; that stretch reads LSSLMHQLEATQPHF. The stretch at 829 to 2104 forms a coiled coil; the sequence is LGTTQTDEYL…RSNRSPSVLR (1276 aa). Disordered regions lie at residues 1245 to 1278 and 1398 to 1426; these read NRSV…DGNN and MEFT…SKRS. The segment covering 1246–1259 has biased composition (polar residues); that stretch reads RSVTQHTLDGNSPH. The segment covering 1261–1278 has biased composition (basic and acidic residues); that stretch reads SFEEKHSGDPLKRIDGNN. The segment covering 1409–1424 has biased composition (polar residues); sequence SKISNLPSSQPGSPSK. At Ser-1421 the chain carries Phosphoserine.

This sequence belongs to the TRAFAC class myosin-kinesin ATPase superfamily. Myosin family. In terms of assembly, binds to cdc4 and rlc1.

Stabilizes the F-actin cables forming the F-actin ring that surrounds the nucleus during interphase. May work in conjunction with myo2. In Schizosaccharomyces pombe (strain 972 / ATCC 24843) (Fission yeast), this protein is Myosin type-2 heavy chain 2 (myo3).